A 341-amino-acid chain; its full sequence is Glyceraldehyde-3-phosphate dehydrogenase, cytosolic (341 aa).

NAD(+)-binding positions include 14 to 15 and D36; that span reads RI. Residues 153-155, T184, 213-214, and R236 each bind D-glyceraldehyde 3-phosphate; these read SCT and TG. C154 (nucleophile) is an active-site residue. N318 contacts NAD(+).

Belongs to the glyceraldehyde-3-phosphate dehydrogenase family. Homotetramer.

It localises to the cytoplasm. The enzyme catalyses D-glyceraldehyde 3-phosphate + phosphate + NAD(+) = (2R)-3-phospho-glyceroyl phosphate + NADH + H(+). It functions in the pathway carbohydrate degradation; glycolysis; pyruvate from D-glyceraldehyde 3-phosphate: step 1/5. Functionally, key enzyme in glycolysis that catalyzes the first step of the pathway by converting D-glyceraldehyde 3-phosphate (G3P) into 3-phospho-D-glyceroyl phosphate. Essential for the maintenance of cellular ATP levels and carbohydrate metabolism. This is Glyceraldehyde-3-phosphate dehydrogenase, cytosolic (GAPC) from Chlamydomonas reinhardtii (Chlamydomonas smithii).